A 180-amino-acid chain; its full sequence is ATP-dependent protease subunit HslV (180 aa).

T7 is an active-site residue. Na(+) contacts are provided by G165, C168, and T171.

It belongs to the peptidase T1B family. HslV subfamily. In terms of assembly, a double ring-shaped homohexamer of HslV is capped on each side by a ring-shaped HslU homohexamer. The assembly of the HslU/HslV complex is dependent on binding of ATP.

The protein localises to the cytoplasm. It carries out the reaction ATP-dependent cleavage of peptide bonds with broad specificity.. With respect to regulation, allosterically activated by HslU binding. Protease subunit of a proteasome-like degradation complex believed to be a general protein degrading machinery. The protein is ATP-dependent protease subunit HslV of Bacillus cytotoxicus (strain DSM 22905 / CIP 110041 / 391-98 / NVH 391-98).